Consider the following 470-residue polypeptide: Mitogen-activated protein kinase 15 (470 aa).

The Protein kinase domain occupies Phe-13–Val-306. ATP contacts are provided by residues Leu-19–Val-27 and Lys-42. Asp-137 (proton acceptor) is an active-site residue. The residue at position 178 (Thr-178) is a Phosphothreonine. The TXY motif lies at Thr-178–Tyr-180. Tyr-180 carries the phosphotyrosine modification. The interval Pro-362–Ser-445 is disordered. Positions Met-394–Ser-406 are enriched in low complexity. The span at Leu-409 to Gly-426 shows a compositional bias: basic and acidic residues.

Belongs to the protein kinase superfamily. CMGC Ser/Thr protein kinase family. MAP kinase subfamily. It depends on Mg(2+) as a cofactor. In terms of processing, dually phosphorylated on Thr-178 and Tyr-180, which activates the enzyme. Expressed in the URX neuron and in many other head sensory neurons. Isoform a: Expressed in head and tail ciliated sensory neurons, and in mid-body neurons. Isoform c: Expressed in head and tail ciliated sensory neurons, and in mid-body neurons.

It is found in the cell projection. The protein localises to the cilium. It localises to the cilium membrane. Its subcellular location is the cytoplasm. The protein resides in the cytoskeleton. It is found in the cilium axoneme. The protein localises to the cilium basal body. It localises to the cell junction. Its subcellular location is the perikaryon. The protein resides in the dendrite. The enzyme catalyses L-seryl-[protein] + ATP = O-phospho-L-seryl-[protein] + ADP + H(+). It catalyses the reaction L-threonyl-[protein] + ATP = O-phospho-L-threonyl-[protein] + ADP + H(+). Activated by threonine and tyrosine phosphorylation. Atypical MAPK protein. Regulates primary cilium formation in sensory neurons and the localization of ciliary proteins involved in cilium structure, transport, and signaling. Acts in dopamine (DA) neurons to support synaptic membrane dat-1 availability via activation of rho-1 thereby sustaining normal levels of DA clearance. Plays a role in male mating behavior, probably in part through regulating the localization of the polycystin pkd-2. Functions postembryonically in the URX sensory neurons to constrain URX dendrite growth throughout lifetime, probably by restricting expansion of the subcellular sensory compartment at the dendrite ending. The sequence is that of Mitogen-activated protein kinase 15 from Caenorhabditis elegans.